The following is a 440-amino-acid chain: GTPase Der (440 aa).

EngA-type G domains follow at residues 4 to 168 and 177 to 352; these read PVVA…PPEK and IKIA…GRHS. GTP-binding positions include 10–17, 57–61, 120–123, 183–190, 230–234, and 295–298; these read GRPNVGKS, DTGGL, NKVE, DTAGM, and NKWD. The KH-like domain occupies 353-437; it reads MRISTPGLNA…PIRFVLRKKT (85 aa).

It belongs to the TRAFAC class TrmE-Era-EngA-EngB-Septin-like GTPase superfamily. EngA (Der) GTPase family. As to quaternary structure, associates with the 50S ribosomal subunit.

Functionally, GTPase that plays an essential role in the late steps of ribosome biogenesis. The sequence is that of GTPase Der from Pelotomaculum thermopropionicum (strain DSM 13744 / JCM 10971 / SI).